We begin with the raw amino-acid sequence, 170 residues long: Translocon-associated protein subunit gamma (170 aa).

The Lumenal segment spans residues 1–24 (MAEVDEFSAFRHENDVSIEQRIVY). The helical transmembrane segment at 25–45 (FINSLIVALVPVYLYHAIFFM) threads the bilayer. Residues 46–51 (SIDDHM) lie on the Cytoplasmic side of the membrane. A helical transmembrane segment spans residues 52 to 72 (IIYGSVTLFAAIVLTFAYNNI). The Lumenal segment spans residues 73-121 (YRMKRLKLSASREHISIASKNKVGDKKKFAAAQKEVQALVTSHEAIAAS). The chain crosses the membrane as a helical span at residues 122–141 (IMYNNAVFLICVSIFSFIIF). Residues 142–145 (KNVP) lie on the Cytoplasmic side of the membrane. Residues 146-168 (LVYNYIISISLGAGLTSFLSTSS) form a helical membrane-spanning segment.

This sequence belongs to the TRAP-gamma family. Heterotrimer of TRAP-alpha, TRAP-beta and TRAP-gamma.

It localises to the endoplasmic reticulum membrane. Functionally, TRAP proteins are part of a complex whose function is to bind calcium to the ER membrane and thereby regulate the retention of ER resident proteins. The protein is Translocon-associated protein subunit gamma (ssr3) of Dictyostelium discoideum (Social amoeba).